The following is a 233-amino-acid chain: Large ribosomal subunit protein uL1 (233 aa).

It belongs to the universal ribosomal protein uL1 family. In terms of assembly, part of the 50S ribosomal subunit.

Functionally, binds directly to 23S rRNA. The L1 stalk is quite mobile in the ribosome, and is involved in E site tRNA release. Its function is as follows. Protein L1 is also a translational repressor protein, it controls the translation of the L11 operon by binding to its mRNA. The protein is Large ribosomal subunit protein uL1 of Polynucleobacter asymbioticus (strain DSM 18221 / CIP 109841 / QLW-P1DMWA-1) (Polynucleobacter necessarius subsp. asymbioticus).